We begin with the raw amino-acid sequence, 435 residues long: Xylose isomerase (435 aa).

Residues Asp-306 and Asp-308 each contribute to the Mg(2+) site.

This sequence belongs to the xylose isomerase family. As to quaternary structure, homotetramer. Requires Mg(2+) as cofactor.

Its subcellular location is the cytoplasm. It carries out the reaction alpha-D-xylose = alpha-D-xylulofuranose. This Brucella melitensis biotype 2 (strain ATCC 23457) protein is Xylose isomerase.